The chain runs to 128 residues: MSATTDEILEKLQSLTLLEAAELVKQIEETFGVSAAAPVGGMVMAAPGAAAAEEVEEKTEFDVILDEVPADKKIAVLKVVRGITGLGLKEAKEMVESAPKPIKEATGKEDAEAIKKQLEDAGAKASVK.

Belongs to the bacterial ribosomal protein bL12 family. Homodimer. Part of the ribosomal stalk of the 50S ribosomal subunit. Forms a multimeric L10(L12)X complex, where L10 forms an elongated spine to which 2 to 4 L12 dimers bind in a sequential fashion. Binds GTP-bound translation factors.

Its function is as follows. Forms part of the ribosomal stalk which helps the ribosome interact with GTP-bound translation factors. Is thus essential for accurate translation. The protein is Large ribosomal subunit protein bL12 of Picosynechococcus sp. (strain ATCC 27264 / PCC 7002 / PR-6) (Agmenellum quadruplicatum).